The primary structure comprises 96 residues: uncharacterized protein (96 aa).

Residues 1–21 traverse the membrane as a helical segment; it reads MSDFEIIVGISSLLQVIILNI.

It localises to the membrane. This is an uncharacterized protein from Saccharomyces cerevisiae (strain ATCC 204508 / S288c) (Baker's yeast).